A 375-amino-acid chain; its full sequence is tRNA-specific 2-thiouridylase MnmA (375 aa).

Residues 8–15 (GLSGGVDS) and Met34 each bind ATP. Positions 104 to 106 (NPD) are interaction with target base in tRNA. Cys109 acts as the Nucleophile in catalysis. A disulfide bridge links Cys109 with Cys208. Residue Gly134 participates in ATP binding. An interaction with tRNA region spans residues 158–160 (KDQ). The active-site Cysteine persulfide intermediate is the Cys208. Residues 321–322 (RY) form an interaction with tRNA region.

This sequence belongs to the MnmA/TRMU family.

It localises to the cytoplasm. The enzyme catalyses S-sulfanyl-L-cysteinyl-[protein] + uridine(34) in tRNA + AH2 + ATP = 2-thiouridine(34) in tRNA + L-cysteinyl-[protein] + A + AMP + diphosphate + H(+). Catalyzes the 2-thiolation of uridine at the wobble position (U34) of tRNA, leading to the formation of s(2)U34. This chain is tRNA-specific 2-thiouridylase MnmA, found in Mycoplasma capricolum subsp. capricolum (strain California kid / ATCC 27343 / NCTC 10154).